Consider the following 454-residue polypeptide: Bifunctional protein GlmU (454 aa).

The interval 1-227 is pyrophosphorylase; the sequence is MTQLSVVILA…FMEVEGANNR (227 aa). UDP-N-acetyl-alpha-D-glucosamine-binding positions include 9–12, Lys23, Gln74, 79–80, 101–103, Gly138, Glu152, Asn167, and Asn225; these read LAAG, GT, and YGD. Mg(2+) is bound at residue Asp103. Asn225 contributes to the Mg(2+) binding site. The tract at residues 228–248 is linker; it reads LQLAALERFYQKTQAEKLLLA. An N-acetyltransferase region spans residues 249 to 454; that stretch reads GVRLIDQARF…QGWQRPTKKK (206 aa). Residues Arg331 and Lys349 each contribute to the UDP-N-acetyl-alpha-D-glucosamine site. The Proton acceptor role is filled by His361. Positions 364 and 375 each coordinate UDP-N-acetyl-alpha-D-glucosamine. Residues Ala378, 384–385, Ser403, Ala421, and Arg438 contribute to the acetyl-CoA site; that span reads NY.

This sequence in the N-terminal section; belongs to the N-acetylglucosamine-1-phosphate uridyltransferase family. It in the C-terminal section; belongs to the transferase hexapeptide repeat family. In terms of assembly, homotrimer. It depends on Mg(2+) as a cofactor.

It localises to the cytoplasm. The catalysed reaction is alpha-D-glucosamine 1-phosphate + acetyl-CoA = N-acetyl-alpha-D-glucosamine 1-phosphate + CoA + H(+). It catalyses the reaction N-acetyl-alpha-D-glucosamine 1-phosphate + UTP + H(+) = UDP-N-acetyl-alpha-D-glucosamine + diphosphate. The protein operates within nucleotide-sugar biosynthesis; UDP-N-acetyl-alpha-D-glucosamine biosynthesis; N-acetyl-alpha-D-glucosamine 1-phosphate from alpha-D-glucosamine 6-phosphate (route II): step 2/2. It functions in the pathway nucleotide-sugar biosynthesis; UDP-N-acetyl-alpha-D-glucosamine biosynthesis; UDP-N-acetyl-alpha-D-glucosamine from N-acetyl-alpha-D-glucosamine 1-phosphate: step 1/1. It participates in bacterial outer membrane biogenesis; LPS lipid A biosynthesis. Functionally, catalyzes the last two sequential reactions in the de novo biosynthetic pathway for UDP-N-acetylglucosamine (UDP-GlcNAc). The C-terminal domain catalyzes the transfer of acetyl group from acetyl coenzyme A to glucosamine-1-phosphate (GlcN-1-P) to produce N-acetylglucosamine-1-phosphate (GlcNAc-1-P), which is converted into UDP-GlcNAc by the transfer of uridine 5-monophosphate (from uridine 5-triphosphate), a reaction catalyzed by the N-terminal domain. In Actinobacillus pleuropneumoniae serotype 7 (strain AP76), this protein is Bifunctional protein GlmU.